The following is a 29-amino-acid chain: Beta-theraphotoxin-Gr1a (29 aa).

Intrachain disulfides connect cysteine 2–cysteine 16, cysteine 9–cysteine 21, and cysteine 15–cysteine 25.

It belongs to the neurotoxin 30 (phrixotoxin) family. In terms of tissue distribution, expressed by the venom gland.

The protein resides in the secreted. Functionally, inhibits voltage-gated sodium channels Nav1.1/SCN1A (IC(50)=630 nM), Nav1.2/SCN2A (IC(50)=230 nM), Nav1.3/SCN3A (IC(50)=770 nM), Nav1.4/SCN4A (IC(50)=1290 nM), Nav1.6/SCN8A (IC(50)=630 nM), Nav1.7/SCN9A (IC(50)=15.3-1000 nM) and potassium channels Kv11.1/KCNH2 (IC(50)=4.2 uM). The chain is Beta-theraphotoxin-Gr1a from Grammostola rosea (Chilean rose tarantula).